The following is a 424-amino-acid chain: MKLEMICTGEEVLSGQIVDTNAAWFASTMMEHGIEIQRRVTVGDRLEDLIAVFQERSLHADVILVNGGLGPTSDDMSAEAMAKAKGESLVENSEWRQRLEDWFTRNNREMPVSNLKQAMLPVSAVMVDNPVGTACGFRVKLNRAWLFFTPGVPFELKHMVKEQFIPFIRDEFNLDAKVALKKLLTIGHGESALADKIEPLELPEGITIGYRSSMPHIEIKIFARGEKAIALLPRVAGHIKMVLGTAVVAEDKATLAEEIHFRLLNSGLTLSAAESCTGGMITSQLVDFPGSSSYLQHGLVTYSNESKVRVLGVNPATLDDHGAVSIPTVEEMAKGARAILDSDFALATSGIAGPDGGTEDKPVGTVAIALATRSGVYSQMIKLPRRSRDLVRSLSAAVAYDMLRRELLSEAVIVDYQSIGRFSK.

This sequence belongs to the CinA family. Homodimer.

It carries out the reaction beta-nicotinamide D-ribonucleotide + H2O = nicotinate beta-D-ribonucleotide + NH4(+). One of the key enzymes of the pyridine nucleotide cycle which permits cells to recycle the by products of NAD consumption back to NAD. Has no activity on NAD, NADP, nicotinamide or nicotinamide riboside. The polypeptide is Nicotinamide-nucleotide amidohydrolase PncC (pncC) (Shewanella oneidensis (strain ATCC 700550 / JCM 31522 / CIP 106686 / LMG 19005 / NCIMB 14063 / MR-1)).